The sequence spans 405 residues: LanC-like protein GCL2 (405 aa).

C278, C323, and H324 together coordinate Zn(2+).

Belongs to the LanC-like protein family.

May play a role in signaling. May be not involved in abscisic acid (ABA) signaling. The polypeptide is LanC-like protein GCL2 (GCL2) (Arabidopsis thaliana (Mouse-ear cress)).